Reading from the N-terminus, the 1027-residue chain is Circadian locomoter output cycles protein kaput (1027 aa).

Residues 15-65 (LCRKSRNLSEKKRRDQFNSLVNDLSALISTSSRKMDKSTVLKSTIAFLKNH) enclose the bHLH domain. 2 consecutive PAS domains span residues 88 to 160 (NDEY…VIEP) and 255 to 321 (REMS…ELRQ). Disordered regions lie at residues 377 to 402 (RKEG…ASTG), 443 to 575 (TSPA…QQLQ), 765 to 800 (QQMM…TQQQ), 869 to 911 (TINP…NNED), and 926 to 1027 (SINF…GSSQ). Residues 383–402 (SGNSNSITNNGSSKVIASTG) are compositionally biased toward low complexity. Over residues 443–486 (TSPAVDSSPMWSASAVQPSGSCQINPLKTSRPASSYGNISSTGI) the composition is skewed to polar residues. Low complexity-rich tracts occupy residues 504 to 516 (SDST…SVTS) and 552 to 575 (QQQQ…QQLQ). An implicated in the circadian rhythmicity region spans residues 780–1027 (QHNLQQQHQS…SPHTAPGSSQ (248 aa)). Composition is skewed to low complexity over residues 871–909 (NPFN…QNNN) and 951–995 (SGSN…NQNQ). The span at 1006 to 1027 (QMSQEQSQNLFNSPHTAPGSSQ) shows a compositional bias: polar residues.

In terms of assembly, efficient DNA binding requires dimerization with another bHLH protein. Forms a heterodimer with Cycle. Widely expressed. Found in head, body, and appendage fractions.

It is found in the nucleus. Circadian regulator that acts as a transcription factor and generates a rhythmic output with a period of about 24 hours. Oscillates in antiphase to the cycling observed for period (PER) and timeless (TIM). According to PubMed:9742131, reaches peak abundance within several hours of the dark-light transition at ZT0 (zeitgeber 0), whereas PubMed:9616122 describes bimodal oscillating expression with maximum at ZT5 and ZT23. Clock-cycle heterodimers activate cycling transcription of PER and TIM by binding to the E-box (5'-CACGTG-3') present in their promoters. Once induced, Period and Timeless block Clock's ability to transactivate their promoters. The sequence is that of Circadian locomoter output cycles protein kaput (Clk) from Drosophila melanogaster (Fruit fly).